We begin with the raw amino-acid sequence, 412 residues long: Transcription factor IIIA (412 aa).

The interval 1–20 (MSESDETKSISSLISSSSSS) is disordered. The span at 9–20 (SISSLISSSSSS) shows a compositional bias: low complexity. C2H2-type zinc fingers lie at residues 25–49 (YICTYEGCDKAYNRPSLLEQHLRTH), 55–79 (YKCTVEDCDKAFFRKSHLETHIVSH), 85–107 (FHCSVCGKGVNSRQHLKRHEITH), 111–136 (FKCTFENCQEAFYKHQSLRHHILSVH), 140–162 (LTCKQCNKVFTRPSKLAQHKLKH), 169–194 (YQCDHPGCFKNFQTWSVLQFHIKQSH), and 197–219 (LKCPKCGKGCVGKKGLSSHMLSH). The segment at 228–252 (WTCDYCDVGKFAKKNELVEHYNIFH) adopts a C2H2-type 8; degenerate zinc-finger fold. The interval 285–316 (LETEKLKVEEDEEDEEDSLDEKRSDVRSDSMS) is disordered. The span at 293–303 (EEDEEDEEDSL) shows a compositional bias: acidic residues. The C2H2-type 9 zinc-finger motif lies at 345–369 (INCPKNNCDRMFSREYDLRRHLKWH).

The protein localises to the nucleus. Its function is as follows. Transcription factor required for transcription of 5S rRNA by RNA polymerase III. In Candida albicans (strain SC5314 / ATCC MYA-2876) (Yeast), this protein is Transcription factor IIIA (PZF1).